The sequence spans 39 residues: Putative beta-neurotoxin (39 aa).

A disordered region spans residues glycine 1–tyrosine 39. The LCN-type CS-alpha/beta domain maps to lysine 3–tyrosine 39. The span at threonine 28–tyrosine 39 shows a compositional bias: basic and acidic residues.

This sequence belongs to the long (4 C-C) scorpion toxin superfamily. Sodium channel inhibitor family. Beta subfamily. In terms of tissue distribution, expressed by the venom gland.

Its subcellular location is the secreted. Functionally, beta toxins bind voltage-independently at site-4 of sodium channels (Nav) and shift the voltage of activation toward more negative potentials thereby affecting sodium channel activation and promoting spontaneous and repetitive firing. This Tityus pachyurus (Colombian scorpion) protein is Putative beta-neurotoxin.